The following is a 257-amino-acid chain: AN1-type zinc finger protein 2B (257 aa).

AN1-type zinc fingers lie at residues 4–52 (PDLG…QKDI) and 94–142 (KIFT…HPTS). Residues cysteine 10, cysteine 15, cysteine 25, cysteine 28, cysteine 33, histidine 36, histidine 42, cysteine 44, cysteine 100, cysteine 105, cysteine 115, cysteine 118, cysteine 123, histidine 126, histidine 132, and cysteine 134 each coordinate Zn(2+). Residues 141 to 151 (TSRAGLAAISR) are VCP/p97-interacting motif (VIM). The disordered stretch occupies residues 153-187 (QAVASTSTVPSPSQTMPSCTSPSRATTRSPSWTAP). Residues 155-171 (VASTSTVPSPSQTMPSC) show a composition bias toward polar residues. Serine 163 and serine 173 each carry phosphoserine. A compositionally biased stretch (low complexity) spans 172–186 (TSPSRATTRSPSWTA). UIM domains lie at 197–216 (SEDE…TKPQ) and 221–240 (QEEE…AEYQ). Position 254 is a cysteine methyl ester (cysteine 254). The S-geranylgeranyl cysteine moiety is linked to residue cysteine 254. The CAAX motif signature appears at 254–257 (CSLC). The propeptide at 255 to 257 (SLC) is removed in mature form.

Binds 'Lys-48'-linked polyubiquitin chains of ubiquitinated proteins. Associates with the proteasome complex; upon exposure to arsenite. Interacts (via VIM motif) with VCP; the interaction is direct. Interacts with BAG6. Interacts with IGF1R (nascent precursor form). Interacts with DERL1, FAF2, NPLOC4 and UFD1; probably through VCP. Post-translationally, phosphorylated by MAPK14. Phosphorylation has no effect on association with the proteasome complex.

Its subcellular location is the endoplasmic reticulum membrane. Its function is as follows. Plays a role in protein homeostasis by regulating both the translocation and the ubiquitin-mediated proteasomal degradation of nascent proteins at the endoplasmic reticulum. It is involved in the regulation of signal-mediated translocation of proteins into the endoplasmic reticulum. It also plays a role in the ubiquitin-mediated proteasomal degradation of proteins for which signal-mediated translocation to the endoplasmic reticulum has failed. May therefore function in the endoplasmic reticulum stress-induced pre-emptive quality control, a mechanism that selectively attenuates the translocation of newly synthesized proteins into the endoplasmic reticulum and reroutes them to the cytosol for proteasomal degradation. By controlling the steady-state expression of the IGF1R receptor, indirectly regulates the insulin-like growth factor receptor signaling pathway. This chain is AN1-type zinc finger protein 2B, found in Homo sapiens (Human).